Here is a 300-residue protein sequence, read N- to C-terminus: ADP,ATP carrier protein 2 (300 aa).

3 Solcar repeats span residues 8–100 (VAFI…YKQV), 113–203 (RYFI…ARGM), and 214–299 (VSWA…IKKV). Helical transmembrane passes span 10 to 39 (FIKD…LLLQ), 77 to 101 (LANV…KQVF), 112 to 132 (TRYF…SLCF), 181 to 201 (VSVQ…DTAR), and 213 to 233 (YVSW…SYPF). 2 residues coordinate ADP: Arg-82 and Lys-94. An ADP-binding site is contributed by Arg-237. Residues 237–242 (RRRMMM) form an important for transport activity region. The Nucleotide carrier signature motif motif lies at 237–242 (RRRMMM). Residues 276–293 (AFSNVLRGTGGAFVLVLY) form a helical membrane-spanning segment.

Belongs to the mitochondrial carrier (TC 2.A.29) family. In terms of assembly, monomer.

It is found in the mitochondrion inner membrane. It catalyses the reaction ADP(in) + ATP(out) = ADP(out) + ATP(in). Its activity is regulated as follows. The matrix-open state (m-state) is inhibited by the membrane-permeable bongkrekic acid (BKA). The cytoplasmic-open state (c-state) is inhibited by the membrane-impermeable toxic inhibitor carboxyatractyloside (CATR). Functionally, ADP:ATP antiporter that mediates import of ADP into the mitochondrial matrix for ATP synthesis, and export of ATP out to fuel the cell. Cycles between the cytoplasmic-open state (c-state) and the matrix-open state (m-state): operates by the alternating access mechanism with a single substrate-binding site intermittently exposed to either the cytosolic (c-state) or matrix (m-state) side of the inner mitochondrial membrane. The chain is ADP,ATP carrier protein 2 from Anopheles gambiae (African malaria mosquito).